A 286-amino-acid polypeptide reads, in one-letter code: 4-hydroxybenzoate octaprenyltransferase (286 aa).

The next 7 helical transmembrane spans lie at 22 to 42, 45 to 65, 98 to 118, 143 to 163, 213 to 233, 238 to 255, and 266 to 286; these read IGTLLLLWPTLWALYLAEKAM, LSVLAIFIFGVFLMRSAGCVI, LFIVLVFCSFLLVLCLNLYTI, FFLGAAFGWSIPMAYGATIEA, IIALLQIITLIFLFSVGYLSQ, YFIVLAIAGLFFVYQCRL, and NAFLNNNYFGLTVFIAVLFGI.

Belongs to the UbiA prenyltransferase family. The cofactor is Mg(2+).

The protein resides in the cell inner membrane. The enzyme catalyses all-trans-octaprenyl diphosphate + 4-hydroxybenzoate = 4-hydroxy-3-(all-trans-octaprenyl)benzoate + diphosphate. Its pathway is cofactor biosynthesis; ubiquinone biosynthesis. Catalyzes the prenylation of para-hydroxybenzoate (PHB) with an all-trans polyprenyl group. Mediates the second step in the final reaction sequence of ubiquinone-8 (UQ-8) biosynthesis, which is the condensation of the polyisoprenoid side chain with PHB, generating the first membrane-bound Q intermediate 3-octaprenyl-4-hydroxybenzoate. The sequence is that of 4-hydroxybenzoate octaprenyltransferase from Histophilus somni (strain 2336) (Haemophilus somnus).